The sequence spans 651 residues: DNA ligase (651 aa).

NAD(+)-binding positions include aspartate 30–aspartate 34, serine 79–methionine 80, and glutamate 105. The active-site N6-AMP-lysine intermediate is the lysine 107. Residues arginine 128, glutamate 162, and lysine 301 each contribute to the NAD(+) site. Zn(2+)-binding residues include cysteine 395, cysteine 398, cysteine 411, and cysteine 416. In terms of domain architecture, BRCT spans alanine 570–valine 651.

Belongs to the NAD-dependent DNA ligase family. LigA subfamily. The cofactor is Mg(2+). Requires Mn(2+) as cofactor.

It carries out the reaction NAD(+) + (deoxyribonucleotide)n-3'-hydroxyl + 5'-phospho-(deoxyribonucleotide)m = (deoxyribonucleotide)n+m + AMP + beta-nicotinamide D-nucleotide.. DNA ligase that catalyzes the formation of phosphodiester linkages between 5'-phosphoryl and 3'-hydroxyl groups in double-stranded DNA using NAD as a coenzyme and as the energy source for the reaction. It is essential for DNA replication and repair of damaged DNA. This chain is DNA ligase, found in Campylobacter lari (strain RM2100 / D67 / ATCC BAA-1060).